Reading from the N-terminus, the 478-residue chain is Protein nucleotidyltransferase YdiU (478 aa).

ATP contacts are provided by Gly-84, Gly-86, Arg-87, Lys-107, Asp-119, Gly-120, Arg-170, and Arg-177. Catalysis depends on Asp-246, which acts as the Proton acceptor. The Mg(2+) site is built by Asn-247 and Asp-256. Asp-256 contributes to the ATP binding site.

The protein belongs to the SELO family. The cofactor is Mg(2+). Requires Mn(2+) as cofactor.

The catalysed reaction is L-seryl-[protein] + ATP = 3-O-(5'-adenylyl)-L-seryl-[protein] + diphosphate. The enzyme catalyses L-threonyl-[protein] + ATP = 3-O-(5'-adenylyl)-L-threonyl-[protein] + diphosphate. It carries out the reaction L-tyrosyl-[protein] + ATP = O-(5'-adenylyl)-L-tyrosyl-[protein] + diphosphate. It catalyses the reaction L-histidyl-[protein] + UTP = N(tele)-(5'-uridylyl)-L-histidyl-[protein] + diphosphate. The catalysed reaction is L-seryl-[protein] + UTP = O-(5'-uridylyl)-L-seryl-[protein] + diphosphate. The enzyme catalyses L-tyrosyl-[protein] + UTP = O-(5'-uridylyl)-L-tyrosyl-[protein] + diphosphate. Its function is as follows. Nucleotidyltransferase involved in the post-translational modification of proteins. It can catalyze the addition of adenosine monophosphate (AMP) or uridine monophosphate (UMP) to a protein, resulting in modifications known as AMPylation and UMPylation. This Escherichia coli O6:K15:H31 (strain 536 / UPEC) protein is Protein nucleotidyltransferase YdiU.